The following is a 727-amino-acid chain: Translation initiation factor IF-2, mitochondrial (727 aa).

Residues 1-29 (MNRKILKLENLLRFHTICRQLHSLCQRRM) constitute a mitochondrion transit peptide. A tr-type G domain is found at 178 to 348 (PRSPVVTIMG…IALAEMLELK (171 aa)). The tract at residues 187–194 (GHVDHGKT) is G1. Position 187–194 (187–194 (GHVDHGKT)) interacts with GTP. The tract at residues 212-216 (GITQH) is G2. Residues 234 to 237 (DTPG) and 288 to 291 (NKCD) contribute to the GTP site. The interval 234 to 237 (DTPG) is G3. A G4 region spans residues 288 to 291 (NKCD). Residues 324–326 (SAL) form a G5 region. At Thr-688 the chain carries Phosphothreonine.

The protein belongs to the TRAFAC class translation factor GTPase superfamily. Classic translation factor GTPase family. IF-2 subfamily. Monomer.

The protein resides in the mitochondrion. One of the essential components for the initiation of protein synthesis. Protects formylmethionyl-tRNA from spontaneous hydrolysis and promotes its binding to the 30S ribosomal subunits. Also involved in the hydrolysis of GTP during the formation of the 70S ribosomal complex. The polypeptide is Translation initiation factor IF-2, mitochondrial (MTIF2) (Bos taurus (Bovine)).